Reading from the N-terminus, the 72-residue chain is Cell division protein ZapB (72 aa).

A coiled-coil region spans residues 1 to 71; that stretch reads MSLEILDQLE…IRSLLGKFDN (71 aa).

Belongs to the ZapB family. In terms of assembly, homodimer. The ends of the coiled-coil dimer bind to each other, forming polymers. Interacts with FtsZ.

It is found in the cytoplasm. Its function is as follows. Non-essential, abundant cell division factor that is required for proper Z-ring formation. It is recruited early to the divisome by direct interaction with FtsZ, stimulating Z-ring assembly and thereby promoting cell division earlier in the cell cycle. Its recruitment to the Z-ring requires functional FtsA or ZipA. The sequence is that of Cell division protein ZapB from Haemophilus influenzae (strain 86-028NP).